The chain runs to 135 residues: MACGLVASNLNLKPGECLRVRGEVAPDAKSFVLNLGKDSNNLCLHFNPRFNAHGDANTIVCNSKDGGAWGTEQREAVFPFQPGSVAEVCITFDQANLTVKLPDGYEFKFPNRLNLEAINYMAADGDFKIKCVAFD.

An N-acetylalanine modification is found at alanine 2. Residues 4–135 enclose the Galectin domain; that stretch reads GLVASNLNLK…DFKIKCVAFD (132 aa). Residues lysine 13 and lysine 29 each carry the N6-acetyllysine modification. At serine 30 the chain carries Phosphoserine; by FAM20C. Residues 45-49, histidine 53, asparagine 62, and 69-72 contribute to the a beta-D-galactoside site; these read HFNPR and WGTE. Lysine 108 carries the post-translational modification N6-acetyllysine; alternate. Lysine 108 is subject to N6-succinyllysine; alternate. Residue lysine 128 is modified to N6-acetyllysine.

Homodimer. Binds LGALS3BP. Interacts with CD2, CD3, CD4, CD6, CD7, CD43, ALCAM and CD45. Interacts with laminin (via poly-N-acetyllactosamine). Interacts with SUSD2. Interacts with cargo receptor TMED10; the interaction mediates the translocation from the cytoplasm into the ERGIC (endoplasmic reticulum-Golgi intermediate compartment) and thereby secretion. Interacts with CD69. Expressed in placenta, maternal decidua and fetal membranes. Within placenta, expressed in trophoblasts, stromal cells, villous endothelium, syncytiotrophoblast apical membrane and villous stroma. Within fetal membranes, expressed in amnion, chorioamniotic mesenchyma and chorion (at protein level). Expressed in cardiac, smooth, and skeletal muscle, neurons, thymus, kidney and hematopoietic cells.

It is found in the secreted. Its subcellular location is the extracellular space. The protein localises to the extracellular matrix. The protein resides in the cytoplasm. Its function is as follows. Lectin that binds beta-galactoside and a wide array of complex carbohydrates. Plays a role in regulating apoptosis, cell proliferation and cell differentiation. Inhibits CD45 protein phosphatase activity and therefore the dephosphorylation of Lyn kinase. Strong inducer of T-cell apoptosis. Plays a negative role in Th17 cell differentiation via activation of the receptor CD69. The polypeptide is Galectin-1 (Homo sapiens (Human)).